Here is a 637-residue protein sequence, read N- to C-terminus: Interleukin-17 receptor E (637 aa).

Positions 1–23 (MGSPRLAALLLSLPLLLIGLAVS) are cleaved as a signal peptide. The Extracellular segment spans residues 24 to 414 (ARVACPCLRS…VLCPDVSHRH (391 aa)). Residues 87–134 (GSPSLSEESHRISIPSSAISHRGQRTKRAQPSAAEGREHLPEAGSQKC) form a disordered region. N-linked (GlcNAc...) asparagine glycosylation is found at Asn-278 and Asn-307. Residues 415 to 435 (LGLLILALLALTALVGVVLVL) form a helical membrane-spanning segment. The Cytoplasmic segment spans residues 436–637 (LGRRLLPGSG…TNSPCGFSCL (202 aa)). The 137-residue stretch at 447-583 (TRPVLLLHAA…LLRDLPRLLR (137 aa)) folds into the SEFIR domain.

Forms heterodimers with IL17RA; the heterodimer binds IL17C. As to expression, predominantly expressed in mucosal tissues, including trachea, lung, kidney and stomach. Highly expressed in colon epithelial cells. Also expressed in testis. Low expression, if any, in heart, liver, spleen, or brain. Among CD4 T-helper cells, expressed at high levels in Th17 cells.

It localises to the cell membrane. The protein localises to the secreted. It is found in the cytoplasm. Functionally, specific functional receptor for IL17C, signaling through the NF-kappa-B and MAPK pathways. Requires TRAF3IP2 /ACT1 for signaling. Crucial regulator in innate immunity to bacterial pathogens, such as Citrobacter rodentium. Isoform 4 and isoform 5 may be either cytoplasmic inactive or dominant active forms. Isoform 2 and isoform 3 may act as soluble decoy receptors. This chain is Interleukin-17 receptor E (Il17re), found in Mus musculus (Mouse).